We begin with the raw amino-acid sequence, 83 residues long: MVVIRLARGGAKARPFFNIVVADKRTRRDGRFIERLGFYNPIATANEESIRIAQDRLTYWRSVGAQASPTVERLISQAAKKAA.

It belongs to the bacterial ribosomal protein bS16 family.

This is Small ribosomal subunit protein bS16 from Albidiferax ferrireducens (strain ATCC BAA-621 / DSM 15236 / T118) (Rhodoferax ferrireducens).